A 117-amino-acid polypeptide reads, in one-letter code: UPF0344 protein GK0697 (117 aa).

4 helical membrane passes run 1-21, 39-59, 60-80, and 97-117; these read MTHAHITSWLITIVLFFLAVS, LFYILTIVTGLLLLHSIASIS, ALYWLKALAGLWVIGAMEMVL, and VIALAVTLFLGLLLPLGFDLF.

The protein belongs to the UPF0344 family.

The protein resides in the cell membrane. This Geobacillus kaustophilus (strain HTA426) protein is UPF0344 protein GK0697.